We begin with the raw amino-acid sequence, 148 residues long: Deoxyuridine 5'-triphosphate nucleotidohydrolase (148 aa).

Substrate contacts are provided by residues 67–69, N80, 84–86, and M94; these read RSG and LID.

It belongs to the dUTPase family. Mg(2+) serves as cofactor.

The catalysed reaction is dUTP + H2O = dUMP + diphosphate + H(+). The protein operates within pyrimidine metabolism; dUMP biosynthesis; dUMP from dCTP (dUTP route): step 2/2. In terms of biological role, this enzyme is involved in nucleotide metabolism: it produces dUMP, the immediate precursor of thymidine nucleotides and it decreases the intracellular concentration of dUTP so that uracil cannot be incorporated into DNA. In Francisella philomiragia subsp. philomiragia (strain ATCC 25017 / CCUG 19701 / FSC 153 / O#319-036), this protein is Deoxyuridine 5'-triphosphate nucleotidohydrolase.